The sequence spans 355 residues: uncharacterized protein (355 aa).

The N-terminal 49 residues, 1–49 (MPMTVVSGRFSTALLPTCFSLSRLHSVKYAAQRRVVFVSRSAHASSASV), are a transit peptide targeting the chloroplast.

This sequence belongs to the methyltransferase superfamily.

The protein resides in the plastid. It localises to the chloroplast. It is found in the plastoglobule. This is an uncharacterized protein from Arabidopsis thaliana (Mouse-ear cress).